The following is a 412-amino-acid chain: Putative odorant receptor 85d (412 aa).

At 1–56 (MLTKKDTQSAKEQEKLKAIPLHSFLKYANVFYLSIGMMAYDHKYSQKWKEVLLHWT) the chain is on the cytoplasmic side. The helical transmembrane segment at 57–77 (FIAQMVNLNTVLISELIYVFL) threads the bilayer. Topologically, residues 78 to 84 (AIGKGSN) are extracellular. Residues 85–105 (FLEATMNLSFIGFVIVGDFKI) form a helical membrane-spanning segment. Residues 106 to 152 (WNISRQRKRLTQVVSRLEELHPQGLAQQEPYNIGHHLSGYSRYSKFY) are Cytoplasmic-facing. The chain crosses the membrane as a helical span at residues 153–173 (FGMHMVLIWTYNLYWAVYYLV). Topologically, residues 174 to 219 (CDFWLGMRQFERMLPYYCWVPWDWSTGYSYYFMYISQNIGGQACLS) are extracellular. Residues 220–240 (GQLAADMLMCALVTLVVMHFI) traverse the membrane as a helical segment. Over 241 to 282 (RLSAHIESHVAGIGSFQHDLEFLQATVAYHQSLIHLCQDINE) the chain is Cytoplasmic. Residues 283-303 (IFGVSLLSNFVSSSFIICFVG) form a helical membrane-spanning segment. Residues 304-314 (FQMTIGSKIDN) lie on the Extracellular side of the membrane. The helical transmembrane segment at 315-335 (LVMLVLFLFCAMVQVFMIATH) threads the bilayer. At 336–382 (AQRLVDASEQIGQAVYNHDWFRADLRYRKMLILIIKRAQQPSRLKAT) the chain is on the cytoplasmic side. The helical transmembrane segment at 383-403 (MFLNISLVTVSDLLQLSYKFF) threads the bilayer. The Extracellular portion of the chain corresponds to 404–412 (ALLRTMYVN).

It belongs to the insect chemoreceptor superfamily. Heteromeric odorant receptor channel (TC 1.A.69) family. Or49a subfamily. In terms of assembly, interacts with Orco. Complexes exist early in the endomembrane system in olfactory sensory neurons (OSNs), coupling these complexes to the conserved ciliary trafficking pathway. Expressed in olfactory sensory neurons in the maxillary palp.

The protein localises to the cell membrane. Its function is as follows. Odorant receptor which mediates acceptance or avoidance behavior, depending on its substrates. The odorant receptor repertoire encodes a large collection of odor stimuli that vary widely in identity, intensity, and duration. May form a complex with Orco to form odorant-sensing units, providing sensitive and prolonged odorant signaling and calcium permeability. The sequence is that of Putative odorant receptor 85d (Or85d) from Drosophila melanogaster (Fruit fly).